The following is a 248-amino-acid chain: Adenosylcobinamide-GDP ribazoletransferase (248 aa).

Transmembrane regions (helical) follow at residues phenylalanine 36–leucine 56, phenylalanine 59–glycine 79, glycine 114–leucine 134, tyrosine 137–leucine 157, isoleucine 170–leucine 190, and alanine 199–leucine 219.

The protein belongs to the CobS family. Requires Mg(2+) as cofactor.

The protein resides in the cell membrane. The catalysed reaction is alpha-ribazole + adenosylcob(III)inamide-GDP = adenosylcob(III)alamin + GMP + H(+). It carries out the reaction alpha-ribazole 5'-phosphate + adenosylcob(III)inamide-GDP = adenosylcob(III)alamin 5'-phosphate + GMP + H(+). Its pathway is cofactor biosynthesis; adenosylcobalamin biosynthesis; adenosylcobalamin from cob(II)yrinate a,c-diamide: step 7/7. Functionally, joins adenosylcobinamide-GDP and alpha-ribazole to generate adenosylcobalamin (Ado-cobalamin). Also synthesizes adenosylcobalamin 5'-phosphate from adenosylcobinamide-GDP and alpha-ribazole 5'-phosphate. The chain is Adenosylcobinamide-GDP ribazoletransferase from Clostridium botulinum (strain Loch Maree / Type A3).